A 146-amino-acid chain; its full sequence is MLAAALRRCTAAAAARGLLHPASAPSPAAAVCSIRCYSHGSHETDEEFDARWVTYFNKPDIDAWELRKGMNTLVGYDLVPEPKIIDAALRACRRLNDFASAVRILEVVKDKAGPHKEIYPYVIQELRPTLNELGISTPEELGLDKV.

The N-terminal 37 residues, 1–37 (MLAAALRRCTAAAAARGLLHPASAPSPAAAVCSIRCY), are a transit peptide targeting the mitochondrion. The SIFI-degron motif lies at 2–16 (LAAALRRCTAAAAAR). N6-acetyllysine is present on residues Lys-83 and Lys-109. Thr-137 carries the post-translational modification Phosphothreonine.

The protein belongs to the cytochrome c oxidase subunit 5A family. Component of the cytochrome c oxidase (complex IV, CIV), a multisubunit enzyme composed of 14 subunits. The complex is composed of a catalytic core of 3 subunits MT-CO1, MT-CO2 and MT-CO3, encoded in the mitochondrial DNA, and 11 supernumerary subunits COX4I, COX5A, COX5B, COX6A, COX6B, COX6C, COX7A, COX7B, COX7C, COX8 and NDUFA4, which are encoded in the nuclear genome. The complex exists as a monomer or a dimer and forms supercomplexes (SCs) in the inner mitochondrial membrane with NADH-ubiquinone oxidoreductase (complex I, CI) and ubiquinol-cytochrome c oxidoreductase (cytochrome b-c1 complex, complex III, CIII), resulting in different assemblies (supercomplex SCI(1)III(2)IV(1) and megacomplex MCI(2)III(2)IV(2)). Interacts with AFG1L. Interacts with RAB5IF. In terms of processing, in response to mitochondrial stress, the precursor protein is ubiquitinated by the SIFI complex in the cytoplasm before mitochondrial import, leading to its degradation. Within the SIFI complex, UBR4 initiates ubiquitin chain that are further elongated or branched by KCMF1.

The protein localises to the mitochondrion inner membrane. The protein operates within energy metabolism; oxidative phosphorylation. Component of the cytochrome c oxidase, the last enzyme in the mitochondrial electron transport chain which drives oxidative phosphorylation. The respiratory chain contains 3 multisubunit complexes succinate dehydrogenase (complex II, CII), ubiquinol-cytochrome c oxidoreductase (cytochrome b-c1 complex, complex III, CIII) and cytochrome c oxidase (complex IV, CIV), that cooperate to transfer electrons derived from NADH and succinate to molecular oxygen, creating an electrochemical gradient over the inner membrane that drives transmembrane transport and the ATP synthase. Cytochrome c oxidase is the component of the respiratory chain that catalyzes the reduction of oxygen to water. Electrons originating from reduced cytochrome c in the intermembrane space (IMS) are transferred via the dinuclear copper A center (CU(A)) of subunit 2 and heme A of subunit 1 to the active site in subunit 1, a binuclear center (BNC) formed by heme A3 and copper B (CU(B)). The BNC reduces molecular oxygen to 2 water molecules using 4 electrons from cytochrome c in the IMS and 4 protons from the mitochondrial matrix. This chain is Cytochrome c oxidase subunit 5A, mitochondrial (Cox5a), found in Mus musculus (Mouse).